Reading from the N-terminus, the 1050-residue chain is RecBCD enzyme subunit RecB (1050 aa).

The UvrD-like helicase ATP-binding domain occupies 1–443; sequence MKPFNIFDSN…LQLVNNYRST (443 aa). The segment at 1 to 766 is DNA-binding and helicase activity, interacts with RecC; the sequence is MKPFNIFDSN…TNYVKLEGTQ (766 aa). Residue 21-28 participates in ATP binding; sequence ASAGTGKT. In terms of domain architecture, UvrD-like helicase C-terminal spans 458–701; it reads SPFLEIPGYL…KITTIHSSKG (244 aa). Residues 814–1050 are nuclease activity, interacts with RecD and RecA; that stretch reads PKTIFSFSST…KAIQKCQAYH (237 aa). Positions 859, 945, and 958 each coordinate Mg(2+). The active-site For nuclease activity is Asp-958.

This sequence belongs to the helicase family. UvrD subfamily. In terms of assembly, heterotrimer of RecB, RecC and RecD. All subunits contribute to DNA-binding. Interacts with RecA. It depends on Mg(2+) as a cofactor.

The catalysed reaction is Exonucleolytic cleavage (in the presence of ATP) in either 5'- to 3'- or 3'- to 5'-direction to yield 5'-phosphooligonucleotides.. The enzyme catalyses Couples ATP hydrolysis with the unwinding of duplex DNA by translocating in the 3'-5' direction.. It carries out the reaction ATP + H2O = ADP + phosphate + H(+). Its function is as follows. A helicase/nuclease that prepares dsDNA breaks (DSB) for recombinational DNA repair. Binds to DSBs and unwinds DNA via a highly rapid and processive ATP-dependent bidirectional helicase activity. Unwinds dsDNA until it encounters a Chi (crossover hotspot instigator) sequence from the 3' direction. Cuts ssDNA a few nucleotides 3' to the Chi site. The properties and activities of the enzyme are changed at Chi. The Chi-altered holoenzyme produces a long 3'-ssDNA overhang and facilitates RecA-binding to the ssDNA for homologous DNA recombination and repair. Holoenzyme degrades any linearized DNA that is unable to undergo homologous recombination. In the holoenzyme this subunit contributes ATPase, 3'-5' helicase, exonuclease activity and loads RecA onto ssDNA. The sequence is that of RecBCD enzyme subunit RecB from Chlamydia pneumoniae (Chlamydophila pneumoniae).